Reading from the N-terminus, the 243-residue chain is UPF0702 transmembrane protein YkjA (243 aa).

3 helical membrane passes run 3 to 23 (WMVW…YILF), 34 to 54 (MNNF…EPIL), and 58 to 78 (LPMS…MSKL).

It belongs to the UPF0702 family.

Its subcellular location is the cell membrane. This Bacillus subtilis (strain 168) protein is UPF0702 transmembrane protein YkjA (ykjA).